The sequence spans 437 residues: MQQFRFIDLFAGIGGFRLGLEAVGGVCVASAEIDQQAIKVYRQNWPTDGVDHNLGDITAIQQLPAHDVLVGGVPCQPWSIAGKNQAFDDPRGQLWADVIRLVQINQPKAFIFENVKGLVDPRNRLCLEIILDSFKDLGYSVFYKLLNSFDFGVAQNRDRVFIVGIQQKLDLNGFSFPEYTESEQRLYHILDNLEVPETKLESIPIQRNLFGERIDVGYNKLTPRGAFNDFFILNDIRNGPTSIHSWEIYPTTEREKQICMIIMRNRRNSRYGDCDGNPMSYQDIAELVAGLAEKELQTLVEKRILRQYPDGKYEFFNRRLSGGIDGTYRIFLPNARFFGTLTARGMHDEIAEISVSGANAEEYKHNFIQQVLIPKRYRKITVSEAARLQGFPGSFQFHSNQSANFRLIGNSVAPPVIVALGKALQCVKLFEQELCEV.

In terms of domain architecture, SAM-dependent MTase C5-type spans 4–431 (FRFIDLFAGI…KALQCVKLFE (428 aa)). Cys-75 is a catalytic residue.

Belongs to the class I-like SAM-binding methyltransferase superfamily. C5-methyltransferase family.

The enzyme catalyses a 2'-deoxycytidine in DNA + S-adenosyl-L-methionine = a 5-methyl-2'-deoxycytidine in DNA + S-adenosyl-L-homocysteine + H(+). Functionally, a methylase that recognizes the double-stranded sequence 5'-GGWCC-3', methylates C-? on both strands, and protects the DNA from cleavage by the HgiBI endonuclease. This system is less active than isoschizomeric RM.HgiEI. This Herpetosiphon aurantiacus (Herpetosiphon giganteus) protein is Type II methyltransferase M.HgiBI.